The chain runs to 1555 residues: Glycogen debranching enzyme (1555 aa).

Ser-87 is modified (phosphoserine). Residues Asp-549, His-552, and Asp-650 contribute to the active site.

This sequence belongs to the glycogen debranching enzyme family. Monomer. Interacts with NHLRC1/malin. Post-translationally, the N-terminus is blocked. In terms of processing, ubiquitinated.

It is found in the cytoplasm. It carries out the reaction Transfers a segment of a (1-&gt;4)-alpha-D-glucan to a new position in an acceptor, which may be glucose or a (1-&gt;4)-alpha-D-glucan.. The enzyme catalyses Hydrolysis of (1-&gt;6)-alpha-D-glucosidic branch linkages in glycogen phosphorylase limit dextrin.. Its function is as follows. Multifunctional enzyme acting as 1,4-alpha-D-glucan:1,4-alpha-D-glucan 4-alpha-D-glycosyltransferase and amylo-1,6-glucosidase in glycogen degradation. The chain is Glycogen debranching enzyme (AGL) from Oryctolagus cuniculus (Rabbit).